Consider the following 695-residue polypeptide: MADLSKYRNIGIFAHVDAGKTTTTERILKLTGKIHRLGEVHDGASTMDFMDQEAERGITIQSAATTCFWKDHRFNVIDTPGHVDFTVEVYRSLKVLDGGIGVFCGSGGVEPQSETNWRYANESEVSRLIFVNKLDRMGADFFRVVEQVKKVLGANPLVMTLPIGREDEFVGVVDVLTRQAFVWDDSGLPENYEIKEIPADMVDQVEEYREMMIESAVEQDDELMMAYMEGEEPSIEQIKACIRKGTRDLAFFPTYCGSAFKNKGMQLVLDAVVDYLPSPTEVEPQPLTNPETGEPTGEVATVSVDAPLKALAFKIMDDRFGALTFIRIYSGRLKKGDTVLNSATGKTERIGRMVEMHANDRNELEAAQAGDIIAVVGMKNVQTGHTLCDPKHECTLEPMIFPEPVISIAVKPKDKNGSEKMGIAIGKMVAEDPSFQVETDEDSGETILKGMGELHLDIKVDILKRTYGVELEVGAPQVAYRETITKAVEDSYTHKKQSGGSGQFGKIDYRIKPGEPNSGFTFKSTVVGGNVPKEFWPAVEKGFEGMMQNGVLAGFPTLDVEVELFDGGFHAVDSSAIAFEIAAKGAFRQSMPKAGPQLLEPIMKVDVFTPEDHVGDVIGDLNRRRGMIKNQEMGATGVRVKADVPLSEMFGYIGTLRTMTSGRGQFSMEFSHYSACPSNVAEQVIAEVKERNAKK.

In terms of domain architecture, tr-type G spans Ser5–Thr280. Residues Ala14 to Thr21, Asp78 to His82, and Asn132 to Asp135 each bind GTP.

Belongs to the TRAFAC class translation factor GTPase superfamily. Classic translation factor GTPase family. EF-G/EF-2 subfamily.

The protein resides in the cytoplasm. Functionally, catalyzes the GTP-dependent ribosomal translocation step during translation elongation. During this step, the ribosome changes from the pre-translocational (PRE) to the post-translocational (POST) state as the newly formed A-site-bound peptidyl-tRNA and P-site-bound deacylated tRNA move to the P and E sites, respectively. Catalyzes the coordinated movement of the two tRNA molecules, the mRNA and conformational changes in the ribosome. The sequence is that of Elongation factor G 2 from Vibrio vulnificus (strain YJ016).